Here is an 897-residue protein sequence, read N- to C-terminus: Schlafen family member 13 (897 aa).

A n'-domain region region spans residues glutamate 2–proline 355. Active-site residues include glutamate 208 and glutamate 213. 3 residues coordinate Zn(2+): histidine 284, cysteine 286, and cysteine 321. Glycine 599–threonine 606 lines the ATP pocket.

The protein belongs to the Schlafen family. Subgroup III subfamily. It depends on Mg(2+) as a cofactor.

It is found in the cytoplasm. Its function is as follows. Endoribonuclease that cleaves tRNAs and rRNAs. Cleaves tRNAs 11 nucleotides from the 3'-terminus at the acceptor stem. Does not act on tRNA(Sec). Able to restrict HIV-1 virus replication; ability to inhibit HIV-1 replication is dependent on endoribonuclease activity. This Homo sapiens (Human) protein is Schlafen family member 13.